The chain runs to 374 residues: Mannitol-1-phosphate 5-dehydrogenase (374 aa).

3-14 provides a ligand contact to NAD(+); sequence AIHFGAGNIGRG.

This sequence belongs to the mannitol dehydrogenase family.

It catalyses the reaction D-mannitol 1-phosphate + NAD(+) = beta-D-fructose 6-phosphate + NADH + H(+). This chain is Mannitol-1-phosphate 5-dehydrogenase, found in Halalkalibacterium halodurans (strain ATCC BAA-125 / DSM 18197 / FERM 7344 / JCM 9153 / C-125) (Bacillus halodurans).